Consider the following 56-residue polypeptide: Large ribosomal subunit protein bL33 (56 aa).

It belongs to the bacterial ribosomal protein bL33 family.

This chain is Large ribosomal subunit protein bL33, found in Acidovorax sp. (strain JS42).